The chain runs to 412 residues: Serine hydroxymethyltransferase (412 aa).

(6S)-5,6,7,8-tetrahydrofolate contacts are provided by residues L117 and G121–L123. K226 carries the post-translational modification N6-(pyridoxal phosphate)lysine. A (6S)-5,6,7,8-tetrahydrofolate-binding site is contributed by S349–F351.

This sequence belongs to the SHMT family. Homodimer. Pyridoxal 5'-phosphate is required as a cofactor.

It localises to the cytoplasm. It catalyses the reaction (6R)-5,10-methylene-5,6,7,8-tetrahydrofolate + glycine + H2O = (6S)-5,6,7,8-tetrahydrofolate + L-serine. It functions in the pathway one-carbon metabolism; tetrahydrofolate interconversion. The protein operates within amino-acid biosynthesis; glycine biosynthesis; glycine from L-serine: step 1/1. In terms of biological role, catalyzes the reversible interconversion of serine and glycine with tetrahydrofolate (THF) serving as the one-carbon carrier. This reaction serves as the major source of one-carbon groups required for the biosynthesis of purines, thymidylate, methionine, and other important biomolecules. Also exhibits THF-independent aldolase activity toward beta-hydroxyamino acids, producing glycine and aldehydes, via a retro-aldol mechanism. The sequence is that of Serine hydroxymethyltransferase from Geobacillus thermodenitrificans (strain NG80-2).